The primary structure comprises 501 residues: MIMFLSSLVTTFWEALHLKTLVLAVVTFLFLINILRSRHPKNYPPGPWRLPFVGNFFQIDTKQTHLVLQQFVKKYGNVFSLELGQSPVVVVSGLPLIKEMFTHLDQNFVNRFMTPVRERITGKNGLVVSNGQTWKEQRRLALMALRNFGLGKKSLEERIQEETHHLVEAIREEGGQPFNPHLKLINAVSNIICSVTFGERFDYEDCQFQELLQLLDETMHLMGSSAGQLYNGFPCIMKYLPGPHQKIFRNWGKLKLFVSHIVKKHEKDWNPDEPRDFIDAFLIEMQKDPDRTTSFNEENLISTTLDLFLGGTETTSSTLRWALLYMSSYPEIQENVQAEIDRVIGHKRQVSLSDRESMPYTNAVIHEVQRMGNIVPLNSSREVTVDTKFNGFHLPKGTMILTNLTALHRDPKEWATPEVFNPEHFLENGQFKKRESFLPFSMGKRACLGEQLAKSELFIFFSALMQKFTFKPPINEKLSLKFRMGLILSPASYRICAIPRV.

Residue C447 participates in heme binding.

It belongs to the cytochrome P450 family. It depends on heme as a cofactor.

The protein localises to the endoplasmic reticulum membrane. It localises to the microsome membrane. The enzyme catalyses an organic molecule + reduced [NADPH--hemoprotein reductase] + O2 = an alcohol + oxidized [NADPH--hemoprotein reductase] + H2O + H(+). In Mus musculus (Mouse), this protein is Cytochrome P450 2J5 (Cyp2j5).